We begin with the raw amino-acid sequence, 252 residues long: Large ribosomal subunit protein uL3 (252 aa).

The residue at position 169 (Gln169) is an N5-methylglutamine.

The protein belongs to the universal ribosomal protein uL3 family. Part of the 50S ribosomal subunit. Forms a cluster with proteins L14 and L19. Methylated by PrmB.

Functionally, one of the primary rRNA binding proteins, it binds directly near the 3'-end of the 23S rRNA, where it nucleates assembly of the 50S subunit. In Hyphomonas neptunium (strain ATCC 15444), this protein is Large ribosomal subunit protein uL3.